The chain runs to 689 residues: Armadillo-like helical domain-containing protein 3 (689 aa).

The chain crosses the membrane as a helical span at residues isoleucine 520–glycine 538.

This sequence belongs to the ARMH3 family.

Its subcellular location is the golgi apparatus membrane. It is found in the cytoplasm. Its function is as follows. May be involved in Golgi maintenance and protein secretion. The sequence is that of Armadillo-like helical domain-containing protein 3 from Xenopus laevis (African clawed frog).